A 92-amino-acid chain; its full sequence is Non-specific lipid-transfer protein 2 (92 aa).

Disulfide bonds link Cys4–Cys52, Cys14–Cys28, Cys29–Cys74, and Cys50–Cys88.

It belongs to the plant LTP family. As to expression, expressed in seeds and, at very low levels, in pulp of fruit (at protein level).

Functionally, plant non-specific lipid-transfer proteins transfer phospholipids as well as galactolipids across membranes. May play a role in wax or cutin deposition in the cell walls of expanding epidermal cells and certain secretory tissues. The chain is Non-specific lipid-transfer protein 2 from Actinidia deliciosa (Kiwi).